Consider the following 380-residue polypeptide: Probable transposase for insertion sequence element IS701 (380 aa).

Involved in the transposition of the insertion sequence. The sequence is that of Probable transposase for insertion sequence element IS701 from Microchaete diplosiphon (Fremyella diplosiphon).